Consider the following 722-residue polypeptide: Polyribonucleotide nucleotidyltransferase (722 aa).

Positions 486 and 492 each coordinate Mg(2+). Residues 553–612 (PKIVQLQIDIDKISLVIGSTGKTVKAITDEFEVKVQIEQNGKIILFGDDDFKMQKAKERI) form the KH domain. The S1 motif domain maps to 622–717 (GEIYEGTVKK…KFGKIDLEIV (96 aa)).

It belongs to the polyribonucleotide nucleotidyltransferase family. It depends on Mg(2+) as a cofactor.

The protein resides in the cytoplasm. The catalysed reaction is RNA(n+1) + phosphate = RNA(n) + a ribonucleoside 5'-diphosphate. Its function is as follows. Involved in mRNA degradation. Catalyzes the phosphorolysis of single-stranded polyribonucleotides processively in the 3'- to 5'-direction. The chain is Polyribonucleotide nucleotidyltransferase from Borreliella burgdorferi (strain ZS7) (Borrelia burgdorferi).